A 460-amino-acid chain; its full sequence is UDP-N-acetylmuramoylalanine--D-glutamate ligase (460 aa).

Gly122–Thr128 contacts ATP.

The protein belongs to the MurCDEF family.

It localises to the cytoplasm. The catalysed reaction is UDP-N-acetyl-alpha-D-muramoyl-L-alanine + D-glutamate + ATP = UDP-N-acetyl-alpha-D-muramoyl-L-alanyl-D-glutamate + ADP + phosphate + H(+). Its pathway is cell wall biogenesis; peptidoglycan biosynthesis. Functionally, cell wall formation. Catalyzes the addition of glutamate to the nucleotide precursor UDP-N-acetylmuramoyl-L-alanine (UMA). The polypeptide is UDP-N-acetylmuramoylalanine--D-glutamate ligase (Jannaschia sp. (strain CCS1)).